The primary structure comprises 346 residues: Putative D-xylulose reductase (346 aa).

3 residues coordinate Zn(2+): Cys-39, His-64, and Glu-150.

It belongs to the zinc-containing alcohol dehydrogenase family. It depends on Zn(2+) as a cofactor.

It carries out the reaction xylitol + NAD(+) = D-xylulose + NADH + H(+). The protein is Putative D-xylulose reductase of Rhizobium meliloti (strain 1021) (Ensifer meliloti).